The sequence spans 66 residues: Large ribosomal subunit protein bL35 (66 aa).

2 stretches are compositionally biased toward basic residues: residues 1–15 and 22–43; these read MSKL…KRFK and ILHK…RKRR. The segment at 1 to 43 is disordered; that stretch reads MSKLKTRSSAAKRFKVTATGKILHKKAGKRHNLSKKSESRKRR.

The protein belongs to the bacterial ribosomal protein bL35 family.

This is Large ribosomal subunit protein bL35 from Dictyoglomus turgidum (strain DSM 6724 / Z-1310).